We begin with the raw amino-acid sequence, 250 residues long: Coproheme decarboxylase (250 aa).

Fe-coproporphyrin III contacts are provided by residues arginine 131, 145-149 (YPMNK), histidine 172, and glutamine 185. The active site involves tyrosine 145.

It belongs to the ChdC family. Type 1 subfamily. It depends on Fe-coproporphyrin III as a cofactor.

It catalyses the reaction Fe-coproporphyrin III + 2 H2O2 + 2 H(+) = heme b + 2 CO2 + 4 H2O. It carries out the reaction Fe-coproporphyrin III + H2O2 + H(+) = harderoheme III + CO2 + 2 H2O. The enzyme catalyses harderoheme III + H2O2 + H(+) = heme b + CO2 + 2 H2O. Its pathway is porphyrin-containing compound metabolism; protoheme biosynthesis. Functionally, involved in coproporphyrin-dependent heme b biosynthesis. Catalyzes the decarboxylation of Fe-coproporphyrin III (coproheme) to heme b (protoheme IX), the last step of the pathway. The reaction occurs in a stepwise manner with a three-propionate intermediate. This Staphylococcus aureus (strain USA300 / TCH1516) protein is Coproheme decarboxylase.